A 1434-amino-acid polypeptide reads, in one-letter code: Nitric oxide synthase 1 (1434 aa).

The interval M1–L205 is interaction with NOSIP. Positions S17–G99 constitute a PDZ domain. 2 disordered regions span residues T112–T192 and N276–C302. The segment at Y163 to D245 is interaction with DYNLL1/PIN. Over residues P285 to P299 the composition is skewed to polar residues. A (6R)-L-erythro-5,6,7,8-tetrahydrobiopterin-binding site is contributed by S339. Heme b is bound at residue C420. The L-arginine site is built by Q483, W592, Y593, and E597. 3 residues coordinate (6R)-L-erythro-5,6,7,8-tetrahydrobiopterin: V682, W683, and F696. Residue Y711 participates in heme b binding. The interval K730–M750 is calmodulin-binding. The Flavodoxin-like domain occupies A760 to F940. Positions 766, 767, 768, 770, 771, 812, 813, and 817 each coordinate FMN. A phosphoserine mark is found at S852, S862, and S863. Residues S891, H896, C898, E924, and Q928 each contribute to the FMN site. The FAD-binding FR-type domain occupies K995–P1242. R1015 is a binding site for NADP(+). 7 residues coordinate FAD: H1037, R1178, Y1179, Y1180, S1181, T1196, and A1198. Residue S1201 participates in NADP(+) binding. FAD is bound by residues Y1202, V1215, C1216, and S1217. Positions 1256, 1289, 1318, 1319, 1325, 1327, 1329, 1362, 1403, and 1405 each coordinate NADP(+).

This sequence belongs to the NOS family. Homodimer. Interacts with DLG4; the interaction possibly being prevented by the association between NOS1 and CAPON. Forms a ternary complex with CAPON and RASD1. Forms a ternary complex with CAPON and SYN1. Interacts with ZDHHC23. Interacts with NOSIP; which may impair its synaptic location. Interacts with HTR4. Interacts with SLC6A4. Interacts with VAC14. Interacts (via N-terminal domain) with DLG4 (via N-terminal tandem pair of PDZ domains). Interacts with SLC6A4. Forms a complex with ASL, ASS1 and SLC7A1; the complex regulates cell-autonomous L-arginine synthesis and citrulline recycling while channeling extracellular L-arginine to nitric oxide synthesis pathway. Interacts with DMD; localizes NOS1 to sarcolemma in muscle cells. Interacts with DYNLL1; inhibits the nitric oxide synthase activity. It depends on heme b as a cofactor. Requires FAD as cofactor. FMN serves as cofactor. (6R)-L-erythro-5,6,7,8-tetrahydrobiopterin is required as a cofactor. Ubiquitinated; mediated by STUB1/CHIP in the presence of Hsp70 and Hsp40 (in vitro). As to expression, isoform 1 is ubiquitously expressed: detected in skeletal muscle and brain, also in testis, lung and kidney, and at low levels in heart, adrenal gland and retina. Not detected in the platelets. Isoform 3 is expressed only in testis. Isoform 4 is detected in testis, skeletal muscle, lung, and kidney, at low levels in the brain, but not in the heart and adrenal gland.

Its subcellular location is the cell membrane. The protein resides in the sarcolemma. It is found in the cell projection. It localises to the dendritic spine. It catalyses the reaction 2 L-arginine + 3 NADPH + 4 O2 + H(+) = 2 L-citrulline + 2 nitric oxide + 3 NADP(+) + 4 H2O. With respect to regulation, stimulated by calcium/calmodulin. Inhibited by DYNLL1 that prevents the dimerization of the protein. Inhibited by NOSIP. Its function is as follows. Produces nitric oxide (NO) which is a messenger molecule with diverse functions throughout the body. In the brain and peripheral nervous system, NO displays many properties of a neurotransmitter. Probably has nitrosylase activity and mediates cysteine S-nitrosylation of cytoplasmic target proteins such SRR. The chain is Nitric oxide synthase 1 from Homo sapiens (Human).